Consider the following 319-residue polypeptide: RWD domain-containing protein 2B (319 aa).

In terms of domain architecture, RWD spans 41–165; sequence AELDLLASMF…EWVREHASGY (125 aa). Position 275 is a phosphoserine (Ser275).

As to expression, ubiquitous.

The chain is RWD domain-containing protein 2B (RWDD2B) from Homo sapiens (Human).